The primary structure comprises 522 residues: BTB/POZ domain-containing protein 16 (522 aa).

The BTB domain maps to 166-222; it reads INDPAVTRVAFALALKNLYMKEVEMTVDNVLGVLASAHILQFNRLFQKCVNMMMNRL.

The sequence is that of BTB/POZ domain-containing protein 16 (Btbd16) from Mus musculus (Mouse).